The sequence spans 481 residues: Multiple inositol polyphosphate phosphatase 1 (481 aa).

Positions 1 to 30 (MLRGARSHLPASVAPAAVLAAALLSSFARC) are cleaved as a signal peptide. The active site involves H89. N-linked (GlcNAc...) asparagine glycosylation is found at N236 and N475. The short motif at 478 to 481 (SDEL) is the Prevents secretion from ER element.

Belongs to the histidine acid phosphatase family. MINPP1 subfamily. N-glycosylated. In terms of tissue distribution, widely expressed with highest levels in kidney, intestine, thymus and liver.

The protein localises to the endoplasmic reticulum lumen. The protein resides in the secreted. Its subcellular location is the cell membrane. The enzyme catalyses 1D-myo-inositol hexakisphosphate + H2O = 1D-myo-inositol 1,2,4,5,6-pentakisphosphate + phosphate. It carries out the reaction 1D-myo-inositol 1,2,4,5,6-pentakisphosphate + H2O = 1D-myo-inositol 1,2,5,6-tetrakisphosphate + phosphate. It catalyses the reaction 1D-myo-inositol 1,2,5,6-tetrakisphosphate + H2O = 1D-myo-inositol 1,2,6-trisphosphate + phosphate. The catalysed reaction is 1D-myo-inositol 1,2,6-trisphosphate + H2O = 1D-myo-inositol 1,2-bisphosphate + phosphate. The enzyme catalyses 1D-myo-inositol 1,2-bisphosphate + H2O = 1D-myo-inositol 2-phosphate + phosphate. It carries out the reaction 1D-myo-inositol hexakisphosphate + H2O = 1D-myo-inositol 1,2,3,5,6-pentakisphosphate + phosphate. It catalyses the reaction 1D-myo-inositol 1,2,3,5,6-pentakisphosphate + H2O = 1D-myo-inositol 1,2,3,6-tetrakisphosphate + phosphate. The catalysed reaction is 1D-myo-inositol 1,2,3,6-tetrakisphosphate + H2O = 1D-myo-inositol 1,2,3-trisphosphate + phosphate. The enzyme catalyses 1D-myo-inositol 1,2,3-trisphosphate + H2O = 1D-myo-inositol 2,3-bisphosphate + phosphate. It carries out the reaction 1D-myo-inositol 2,3-bisphosphate + H2O = 1D-myo-inositol 2-phosphate + phosphate. It catalyses the reaction 1D-myo-inositol 1,3,4,5,6-pentakisphosphate + H2O = 1D-myo-inositol 1,4,5,6-tetrakisphosphate + phosphate. The catalysed reaction is 1D-myo-inositol 1,4,5,6-tetrakisphosphate + H2O = 1D-myo-inositol 1,4,5-trisphosphate + phosphate. The enzyme catalyses (2R)-2,3-bisphosphoglycerate + H2O = (2R)-2-phosphoglycerate + phosphate. Multiple inositol polyphosphate phosphatase that hydrolyzes 1D-myo-inositol 1,3,4,5,6-pentakisphosphate (InsP5[2OH]) and 1D-myo-inositol hexakisphosphate (InsP6) to a range of less phosphorylated inositol phosphates. This regulates the availability of these various small molecule second messengers and metal chelators which control many aspects of cell physiology. Has a weak in vitro activity towards 1D-myo-inositol 1,4,5-trisphosphate which is unlikely to be physiologically relevant. By regulating intracellular inositol polyphosphates pools, which act as metal chelators, it may control the availability of intracellular calcium and iron, which are important for proper neuronal development and homeostasis. May have a dual substrate specificity, and function as a 2,3-bisphosphoglycerate 3-phosphatase hydrolyzing 2,3-bisphosphoglycerate to 2-phosphoglycerate. 2,3-bisphosphoglycerate (BPG) is formed as part of the Rapoport-Luebering glycolytic bypass and is a regulator of systemic oxygen homeostasis as the major allosteric effector of hemoglobin. In Mus musculus (Mouse), this protein is Multiple inositol polyphosphate phosphatase 1.